The sequence spans 127 residues: Small ribosomal subunit protein bS6 (127 aa).

Residues 99 to 127 (PSPMMKEEKSKSMMPGDAAPAAPAETAAA) are disordered. Residues 110-127 (SMMPGDAAPAAPAETAAA) show a composition bias toward low complexity.

It belongs to the bacterial ribosomal protein bS6 family.

Binds together with bS18 to 16S ribosomal RNA. The sequence is that of Small ribosomal subunit protein bS6 from Dechloromonas aromatica (strain RCB).